The chain runs to 425 residues: Serine--tRNA ligase (425 aa).

233–235 (TAE) provides a ligand contact to L-serine. Position 264–266 (264–266 (RAE)) interacts with ATP. Position 287 (E287) interacts with L-serine. ATP is bound at residue 351-354 (EISS). An L-serine-binding site is contributed by S387.

This sequence belongs to the class-II aminoacyl-tRNA synthetase family. Type-1 seryl-tRNA synthetase subfamily. In terms of assembly, homodimer. The tRNA molecule binds across the dimer.

Its subcellular location is the cytoplasm. It carries out the reaction tRNA(Ser) + L-serine + ATP = L-seryl-tRNA(Ser) + AMP + diphosphate + H(+). It catalyses the reaction tRNA(Sec) + L-serine + ATP = L-seryl-tRNA(Sec) + AMP + diphosphate + H(+). The protein operates within aminoacyl-tRNA biosynthesis; selenocysteinyl-tRNA(Sec) biosynthesis; L-seryl-tRNA(Sec) from L-serine and tRNA(Sec): step 1/1. Its function is as follows. Catalyzes the attachment of serine to tRNA(Ser). Is also able to aminoacylate tRNA(Sec) with serine, to form the misacylated tRNA L-seryl-tRNA(Sec), which will be further converted into selenocysteinyl-tRNA(Sec). In Clostridium botulinum (strain Alaska E43 / Type E3), this protein is Serine--tRNA ligase.